Consider the following 262-residue polypeptide: Putative BTB/POZ domain-containing protein L834 (262 aa).

Residues 16–86 (FDVVVELTDE…FYKKNIQPCI (71 aa)) enclose the BTB domain.

The protein belongs to the mimivirus BTB/WD family.

This chain is Putative BTB/POZ domain-containing protein L834, found in Acanthamoeba polyphaga (Amoeba).